We begin with the raw amino-acid sequence, 425 residues long: Serine--tRNA ligase (425 aa).

230-232 lines the L-serine pocket; it reads TAE. 261–263 contributes to the ATP binding site; sequence RSE. Glu-284 lines the L-serine pocket. 348–351 serves as a coordination point for ATP; sequence EISS. Ser-384 contacts L-serine.

The protein belongs to the class-II aminoacyl-tRNA synthetase family. Type-1 seryl-tRNA synthetase subfamily. As to quaternary structure, homodimer. The tRNA molecule binds across the dimer.

The protein resides in the cytoplasm. The catalysed reaction is tRNA(Ser) + L-serine + ATP = L-seryl-tRNA(Ser) + AMP + diphosphate + H(+). It carries out the reaction tRNA(Sec) + L-serine + ATP = L-seryl-tRNA(Sec) + AMP + diphosphate + H(+). Its pathway is aminoacyl-tRNA biosynthesis; selenocysteinyl-tRNA(Sec) biosynthesis; L-seryl-tRNA(Sec) from L-serine and tRNA(Sec): step 1/1. Its function is as follows. Catalyzes the attachment of serine to tRNA(Ser). Is also able to aminoacylate tRNA(Sec) with serine, to form the misacylated tRNA L-seryl-tRNA(Sec), which will be further converted into selenocysteinyl-tRNA(Sec). The chain is Serine--tRNA ligase from Streptococcus thermophilus (strain ATCC BAA-491 / LMD-9).